A 731-amino-acid chain; its full sequence is Alpha-xylosidase (731 aa).

Residues D353 and E356 contribute to the active site. D428 functions as the Proton donor in the catalytic mechanism.

Belongs to the glycosyl hydrolase 31 family. As to quaternary structure, monomer.

The enzyme catalyses Hydrolysis of terminal, non-reducing alpha-D-xylose residues with release of alpha-D-xylose.. In terms of biological role, catalyzes the liberation of alpha-xylose from the non-reducing terminal glucose of xyloglucan oligosaccharides. Has high hydrolytic activity on the disaccharide isoprimeverose. Follows a retaining mechanism of substrate hydrolysis. In Saccharolobus solfataricus (strain ATCC 35092 / DSM 1617 / JCM 11322 / P2) (Sulfolobus solfataricus), this protein is Alpha-xylosidase (xylS).